We begin with the raw amino-acid sequence, 98 residues long: Beta-2-microglobulin (98 aa).

One can recognise an Ig-like C1-type domain in the interval 4–92 (PKVQVYSRFP…HETLKEPQVY (89 aa)). Residues cysteine 24 and cysteine 79 are joined by a disulfide bond.

Belongs to the beta-2-microglobulin family. In terms of assembly, heterodimer of an alpha chain and a beta chain. Beta-2-microglobulin is the beta-chain of major histocompatibility complex class I molecules.

It localises to the secreted. Component of the class I major histocompatibility complex (MHC). Involved in the presentation of peptide antigens to the immune system. This chain is Beta-2-microglobulin (B2M), found in Meleagris gallopavo (Wild turkey).